The sequence spans 205 residues: Small ribosomal subunit protein uS4 (205 aa).

Residues 21–47 form a disordered region; the sequence is GRPKSPFNKRDYGPGQHGQGRKGKPSD. Residues 94–154 enclose the S4 RNA-binding domain; the sequence is RRLDSVVYRA…DKSKQLAIID (61 aa).

Belongs to the universal ribosomal protein uS4 family. As to quaternary structure, part of the 30S ribosomal subunit. Contacts protein S5. The interaction surface between S4 and S5 is involved in control of translational fidelity.

Its function is as follows. One of the primary rRNA binding proteins, it binds directly to 16S rRNA where it nucleates assembly of the body of the 30S subunit. In terms of biological role, with S5 and S12 plays an important role in translational accuracy. The protein is Small ribosomal subunit protein uS4 of Pelagibacter ubique (strain HTCC1062).